The sequence spans 163 residues: Lipoprotein signal peptidase (163 aa).

Transmembrane regions (helical) follow at residues 9–29, 39–59, 67–87, and 92–112; these read YLAI…SALS, VLPF…SFLA, WFFT…LYKS, and LLCI…LDRV. Catalysis depends on residues Asp-119 and Asp-137. A helical membrane pass occupies residues 130 to 150; it reads WPAFNIADSAICVGAALIIWG.

It belongs to the peptidase A8 family.

It is found in the cell inner membrane. The enzyme catalyses Release of signal peptides from bacterial membrane prolipoproteins. Hydrolyzes -Xaa-Yaa-Zaa-|-(S,diacylglyceryl)Cys-, in which Xaa is hydrophobic (preferably Leu), and Yaa (Ala or Ser) and Zaa (Gly or Ala) have small, neutral side chains.. Its pathway is protein modification; lipoprotein biosynthesis (signal peptide cleavage). This protein specifically catalyzes the removal of signal peptides from prolipoproteins. In Polynucleobacter necessarius subsp. necessarius (strain STIR1), this protein is Lipoprotein signal peptidase.